We begin with the raw amino-acid sequence, 150 residues long: Endoribonuclease YbeY (150 aa).

Zn(2+) is bound by residues H102, H106, and H112.

The protein belongs to the endoribonuclease YbeY family. Zn(2+) serves as cofactor.

Its subcellular location is the cytoplasm. Functionally, single strand-specific metallo-endoribonuclease involved in late-stage 70S ribosome quality control and in maturation of the 3' terminus of the 16S rRNA. The sequence is that of Endoribonuclease YbeY from Thermotoga petrophila (strain ATCC BAA-488 / DSM 13995 / JCM 10881 / RKU-1).